The chain runs to 235 residues: Thiopurine S-methyltransferase (235 aa).

Positions 13, 48, 69, and 126 each coordinate S-adenosyl-L-methionine. Residues 199 to 235 (PDPQNGAPRRVEHKVYQLTGKRPASPEADGRAAETED) are disordered. Basic and acidic residues predominate over residues 226 to 235 (ADGRAAETED).

It belongs to the class I-like SAM-binding methyltransferase superfamily. TPMT family.

It is found in the cytoplasm. It carries out the reaction S-adenosyl-L-methionine + a thiopurine = S-adenosyl-L-homocysteine + a thiopurine S-methylether.. This Stutzerimonas stutzeri (strain A1501) (Pseudomonas stutzeri) protein is Thiopurine S-methyltransferase.